The chain runs to 470 residues: MDIEMAKEPVNPTDTPDIEVTPGLCQPLRRRFRRFVTAKQLYECLRPVFHVTYIHGLTSFYISCDTKTGKKAIKKTIFGYINGIMHIAMFVFAYSLTIYNNCESVASYFFRSRITYFGDLMQIVSGFIGVTVIYLTAFVPNHRLERCLQKFHTMDVQLQTVGVKIMYSKVLRFSYMVLISMFLVNVLFTGGTFSVLYSSEVAPTMALHFTFLIQHTVIAIAIALFSCFTYLVEMRLVMVNKVLKNLAHQWDTRSLKAVNQKQRSLQCLDSFSMYTIVTKDPAEIIQESMEIHHLICEAAATANKYFTYQLLTIISIAFLIIVFDAYYVLETLLGKSKRESKFKTVEFVTFFSCQMILYLIAIISIVEGSNRAIKKSEKTGGIVHSLLNKTKSAEVKEKLQQFSMQLMHLKINFTAAGLFNIDRTLYFTISGALTTYLIILLQFTSNSPNNGYGNGSSCCETFNNMTNHTL.

Over 1–76 (MDIEMAKEPV…KTGKKAIKKT (76 aa)) the chain is Cytoplasmic. A helical membrane pass occupies residues 77-97 (IFGYINGIMHIAMFVFAYSLT). At 98-119 (IYNNCESVASYFFRSRITYFGD) the chain is on the extracellular side. The chain crosses the membrane as a helical span at residues 120-140 (LMQIVSGFIGVTVIYLTAFVP). Topologically, residues 141-175 (NHRLERCLQKFHTMDVQLQTVGVKIMYSKVLRFSY) are cytoplasmic. A helical membrane pass occupies residues 176–196 (MVLISMFLVNVLFTGGTFSVL). At 197–204 (YSSEVAPT) the chain is on the extracellular side. A helical membrane pass occupies residues 205–225 (MALHFTFLIQHTVIAIAIALF). The Cytoplasmic segment spans residues 226–309 (SCFTYLVEMR…ATANKYFTYQ (84 aa)). A helical transmembrane segment spans residues 310 to 330 (LLTIISIAFLIIVFDAYYVLE). Residues 331–346 (TLLGKSKRESKFKTVE) are Extracellular-facing. Residues 347 to 367 (FVTFFSCQMILYLIAIISIVE) form a helical membrane-spanning segment. The Cytoplasmic portion of the chain corresponds to 368–423 (GSNRAIKKSEKTGGIVHSLLNKTKSAEVKEKLQQFSMQLMHLKINFTAAGLFNIDR). The helical transmembrane segment at 424 to 444 (TLYFTISGALTTYLIILLQFT) threads the bilayer. The Extracellular segment spans residues 445–470 (SNSPNNGYGNGSSCCETFNNMTNHTL). Residues Asn-454, Asn-464, and Asn-467 are each glycosylated (N-linked (GlcNAc...) asparagine).

This sequence belongs to the insect chemoreceptor superfamily. Gustatory receptor (GR) family. Gr66a subfamily. In terms of tissue distribution, isoforms A and E have taste neuron-specific expression restricted to the labial palps, the internal taste organs in the pharynx, and the legs. In addition to expression in a large number of taste neurons, isoform A is also expressed in a few nonchemosensory neurons, including the campaniform sensilla of the wing, leg stretch receptors, and multiple dendritic neurons in the abdomen. Isoform B is the only receptor not expressed in gustatory receptor neurons in the labellum. We observe expression of this receptor in a single large cell at the base of each maxillary palp, in campaniform sensilla of the wing, and multiple dendritic neurons in the abdomen. Isoform C is expressed by many gustatory receptor neurons in the labial palps, the pharyngeal taste clusters, and taste neurons in the legs. In addition, isoform C expressed in a single cell at the base of the maxillary palps, neurons in the Johnston's organ (JO), campaniform sensilla of the wing, stretch receptors and the femoral chordotonal organ of the legs, and multiple dendritic neurons in the abdomen. Isoform D is expressed in a small number of gustatory receptor neurons in the labial palps, the ventral cibarial sense organ (VCSO), and legs. Atypical expression is observed in three neurons in the arista, campaniform sensilla of the wing, stretch and femoral chordotonal organ receptors in the legs, and multiple dendritic neurons in the abdomen. In larvae, Isoform A is expressed in neurons of the terminal external chemosensory organ and the dorsal external chemosensory organ; and isoform E is expressed in neurons of the terminal external chemosensory organ.

The protein resides in the cell membrane. Functionally, probable gustatory receptor which mediates acceptance or avoidance behavior, depending on its substrates. Atypical expression also suggests nongustatory roles in the nervous system and tissues involved in proprioception, hygroreception, and other sensory modalities. It is also possible that it has chemosensory roles in the detection of internal ligands. This chain is Putative gustatory receptor 28b (Gr28b), found in Drosophila melanogaster (Fruit fly).